A 192-amino-acid chain; its full sequence is Akirin-1 (192 aa).

The segment at Leu-17–Pro-71 is disordered. Residue Ser-22 is modified to Phosphoserine. Positions Pro-23–Cys-28 match the Nuclear localization signal motif. The segment covering Leu-31–Phe-49 has biased composition (pro residues). The span at Gln-50 to Gln-60 shows a compositional bias: low complexity. Thr-72 carries the post-translational modification Phosphothreonine. Over residues Ala-104 to Ser-122 the composition is skewed to polar residues. Residues Ala-104–Lys-127 form a disordered region. Residues Ser-189–Ser-192 carry the SYVS motif motif.

It belongs to the akirin family. In terms of tissue distribution, widely expressed with the highest expression in heart, liver, placenta and peripheral blood leukocytes.

The protein resides in the nucleus. Molecular adapter that acts as a bridge between proteins, and which is involved skeletal muscle development. Functions as a signal transducer for MSTN during skeletal muscle regeneration and myogenesis. May regulate chemotaxis of both macrophages and myoblasts by reorganising actin cytoskeleton, leading to more efficient lamellipodia formation via a PI3 kinase dependent pathway. In contrast to AKIRIN2, not involved in nuclear import of proteasomes. The protein is Akirin-1 of Homo sapiens (Human).